The sequence spans 119 residues: Large ribosomal subunit protein bL20 (119 aa).

The protein belongs to the bacterial ribosomal protein bL20 family.

Its function is as follows. Binds directly to 23S ribosomal RNA and is necessary for the in vitro assembly process of the 50S ribosomal subunit. It is not involved in the protein synthesizing functions of that subunit. This chain is Large ribosomal subunit protein bL20, found in Metamycoplasma arthritidis (strain 158L3-1) (Mycoplasma arthritidis).